A 58-amino-acid polypeptide reads, in one-letter code: uncharacterized protein (58 aa).

Residues 23–51 (TTTSTSTTTTSTTTSTTTSTTTTTTTTTT) are compositionally biased toward low complexity. The interval 23 to 58 (TTTSTSTTTTSTTTSTTTSTTTTTTTTTTKDFNTET) is disordered.

This is an uncharacterized protein from Dictyostelium discoideum (Social amoeba).